The following is a 302-amino-acid chain: tRNA dimethylallyltransferase (302 aa).

ATP is bound at residue G9–T16. Residue T11–T16 coordinates substrate.

The protein belongs to the IPP transferase family. In terms of assembly, monomer. It depends on Mg(2+) as a cofactor.

It carries out the reaction adenosine(37) in tRNA + dimethylallyl diphosphate = N(6)-dimethylallyladenosine(37) in tRNA + diphosphate. Functionally, catalyzes the transfer of a dimethylallyl group onto the adenine at position 37 in tRNAs that read codons beginning with uridine, leading to the formation of N6-(dimethylallyl)adenosine (i(6)A). The polypeptide is tRNA dimethylallyltransferase (Thermus thermophilus (strain ATCC BAA-163 / DSM 7039 / HB27)).